The sequence spans 688 residues: Glycine--tRNA ligase beta subunit (688 aa).

This sequence belongs to the class-II aminoacyl-tRNA synthetase family. In terms of assembly, tetramer of two alpha and two beta subunits.

It localises to the cytoplasm. It catalyses the reaction tRNA(Gly) + glycine + ATP = glycyl-tRNA(Gly) + AMP + diphosphate. This chain is Glycine--tRNA ligase beta subunit, found in Clostridioides difficile (strain 630) (Peptoclostridium difficile).